Consider the following 216-residue polypeptide: MGSSRLAMRSALGLFFLLFVQISLALKFDIAAGKGERCIRNFVLKDQLVVVTAIVSGERGDGQMVNMHIKDSMGNDHGRPKDVIGETRQAFTSAGDTTFDVCFENTLVSRRGISNPHRSIELDVDIGADARDWSNIQAQEKLKPIETDLRRIEEIVAEVVSEMEYLRAREQKLRDTNESTNERVKWFAFGTMGMLVGLGVWQVIYLRAYFRSKHLI.

Positions 1-25 are cleaved as a signal peptide; sequence MGSSRLAMRSALGLFFLLFVQISLA. Over 26–185 the chain is Lumenal; it reads LKFDIAAGKG…TNESTNERVK (160 aa). The GOLD domain maps to 36-126; the sequence is ERCIRNFVLK…HRSIELDVDI (91 aa). Residues 186–206 form a helical membrane-spanning segment; sequence WFAFGTMGMLVGLGVWQVIYL. Over 207-216 the chain is Cytoplasmic; it reads RAYFRSKHLI.

This sequence belongs to the EMP24/GP25L family.

Its subcellular location is the endoplasmic reticulum membrane. It localises to the golgi apparatus membrane. Constituent of COPII-coated endoplasmic reticulum-derived transport vesicles. Required for efficient transport of a subset of secretory proteins to the Golgi. Facilitates retrograde transport from the Golgi to the endoplasmic reticulum. The chain is Endoplasmic reticulum vesicle protein 25 (erv25) from Emericella nidulans (strain FGSC A4 / ATCC 38163 / CBS 112.46 / NRRL 194 / M139) (Aspergillus nidulans).